The sequence spans 286 residues: Shikimate dehydrogenase (NADP(+)) (286 aa).

Residues 19 to 21 (SLS) and Thr-66 contribute to the shikimate site. Lys-70 (proton acceptor) is an active-site residue. Positions 91 and 107 each coordinate shikimate. Residues 129–133 (GSGGA) and Leu-229 each bind NADP(+). Residue Tyr-231 participates in shikimate binding. An NADP(+)-binding site is contributed by Gly-252.

It belongs to the shikimate dehydrogenase family. In terms of assembly, homodimer.

It carries out the reaction shikimate + NADP(+) = 3-dehydroshikimate + NADPH + H(+). Its pathway is metabolic intermediate biosynthesis; chorismate biosynthesis; chorismate from D-erythrose 4-phosphate and phosphoenolpyruvate: step 4/7. Involved in the biosynthesis of the chorismate, which leads to the biosynthesis of aromatic amino acids. Catalyzes the reversible NADPH linked reduction of 3-dehydroshikimate (DHSA) to yield shikimate (SA). The protein is Shikimate dehydrogenase (NADP(+)) of Prochlorococcus marinus (strain MIT 9312).